Consider the following 85-residue polypeptide: uncharacterized protein (85 aa).

This is an uncharacterized protein from Sinorhizobium fredii (strain NBRC 101917 / NGR234).